Consider the following 415-residue polypeptide: Gamma-glutamyl phosphate reductase (415 aa).

The protein belongs to the gamma-glutamyl phosphate reductase family.

The protein localises to the cytoplasm. The catalysed reaction is L-glutamate 5-semialdehyde + phosphate + NADP(+) = L-glutamyl 5-phosphate + NADPH + H(+). It participates in amino-acid biosynthesis; L-proline biosynthesis; L-glutamate 5-semialdehyde from L-glutamate: step 2/2. Functionally, catalyzes the NADPH-dependent reduction of L-glutamate 5-phosphate into L-glutamate 5-semialdehyde and phosphate. The product spontaneously undergoes cyclization to form 1-pyrroline-5-carboxylate. In Parabacteroides distasonis (strain ATCC 8503 / DSM 20701 / CIP 104284 / JCM 5825 / NCTC 11152), this protein is Gamma-glutamyl phosphate reductase.